The sequence spans 354 residues: S-adenosylmethionine:tRNA ribosyltransferase-isomerase (354 aa).

The protein belongs to the QueA family. As to quaternary structure, monomer.

The protein resides in the cytoplasm. The enzyme catalyses 7-aminomethyl-7-carbaguanosine(34) in tRNA + S-adenosyl-L-methionine = epoxyqueuosine(34) in tRNA + adenine + L-methionine + 2 H(+). Its pathway is tRNA modification; tRNA-queuosine biosynthesis. In terms of biological role, transfers and isomerizes the ribose moiety from AdoMet to the 7-aminomethyl group of 7-deazaguanine (preQ1-tRNA) to give epoxyqueuosine (oQ-tRNA). The chain is S-adenosylmethionine:tRNA ribosyltransferase-isomerase from Pseudomonas fluorescens (strain ATCC BAA-477 / NRRL B-23932 / Pf-5).